The chain runs to 146 residues: 3-hydroxyacyl-[acyl-carrier-protein] dehydratase FabZ (146 aa).

H49 is a catalytic residue.

This sequence belongs to the thioester dehydratase family. FabZ subfamily.

It localises to the cytoplasm. The enzyme catalyses a (3R)-hydroxyacyl-[ACP] = a (2E)-enoyl-[ACP] + H2O. Its function is as follows. Involved in unsaturated fatty acids biosynthesis. Catalyzes the dehydration of short chain beta-hydroxyacyl-ACPs and long chain saturated and unsaturated beta-hydroxyacyl-ACPs. The chain is 3-hydroxyacyl-[acyl-carrier-protein] dehydratase FabZ from Pseudomonas entomophila (strain L48).